Consider the following 1127-residue polypeptide: Carbamoyl phosphate synthase large chain (1127 aa).

Residues 1 to 402 (MPKRTDIKSV…SLGKAMRSID (402 aa)) are carboxyphosphate synthetic domain. Arginine 129, arginine 169, glycine 175, glycine 176, glutamate 208, isoleucine 210, glutamate 215, glycine 241, valine 242, histidine 243, glutamine 285, and glutamate 299 together coordinate ATP. Residues 133–328 (KKVVDEAGAE…IAKIATKLAL (196 aa)) enclose the ATP-grasp 1 domain. 3 residues coordinate Mg(2+): glutamine 285, glutamate 299, and asparagine 301. 3 residues coordinate Mn(2+): glutamine 285, glutamate 299, and asparagine 301. The tract at residues 403–551 (KRHMGFNWDG…YYYSCYADET (149 aa)) is oligomerization domain. The tract at residues 552–962 (ELRPREREAV…AFAKSQLAAY (411 aa)) is carbamoyl phosphate synthetic domain. One can recognise an ATP-grasp 2 domain in the interval 681 to 881 (GEVLKKAEMN…LAKAAARIMA (201 aa)). The ATP site is built by arginine 717, lysine 765, leucine 767, glutamate 772, glycine 797, valine 798, histidine 799, serine 800, glutamine 840, and glutamate 852. Mg(2+) contacts are provided by glutamine 840, glutamate 852, and asparagine 854. Mn(2+) contacts are provided by glutamine 840, glutamate 852, and asparagine 854. The interval 963-1127 (DGGLPTHGNV…QLFELERREF (165 aa)) is allosteric domain. Positions 964–1127 (GGLPTHGNVF…QLFELERREF (164 aa)) constitute an MGS-like domain.

Belongs to the CarB family. Composed of two chains; the small (or glutamine) chain promotes the hydrolysis of glutamine to ammonia, which is used by the large (or ammonia) chain to synthesize carbamoyl phosphate. Tetramer of heterodimers (alpha,beta)4. Mg(2+) is required as a cofactor. Requires Mn(2+) as cofactor.

It catalyses the reaction hydrogencarbonate + L-glutamine + 2 ATP + H2O = carbamoyl phosphate + L-glutamate + 2 ADP + phosphate + 2 H(+). The enzyme catalyses hydrogencarbonate + NH4(+) + 2 ATP = carbamoyl phosphate + 2 ADP + phosphate + 2 H(+). It participates in amino-acid biosynthesis; L-arginine biosynthesis; carbamoyl phosphate from bicarbonate: step 1/1. Its pathway is pyrimidine metabolism; UMP biosynthesis via de novo pathway; (S)-dihydroorotate from bicarbonate: step 1/3. Functionally, large subunit of the glutamine-dependent carbamoyl phosphate synthetase (CPSase). CPSase catalyzes the formation of carbamoyl phosphate from the ammonia moiety of glutamine, carbonate, and phosphate donated by ATP, constituting the first step of 2 biosynthetic pathways, one leading to arginine and/or urea and the other to pyrimidine nucleotides. The large subunit (synthetase) binds the substrates ammonia (free or transferred from glutamine from the small subunit), hydrogencarbonate and ATP and carries out an ATP-coupled ligase reaction, activating hydrogencarbonate by forming carboxy phosphate which reacts with ammonia to form carbamoyl phosphate. The chain is Carbamoyl phosphate synthase large chain from Bifidobacterium longum (strain DJO10A).